Reading from the N-terminus, the 65-residue chain is Large ribosomal subunit protein bL35 (65 aa).

Residues Lys23–Leu44 form a disordered region.

The protein belongs to the bacterial ribosomal protein bL35 family.

The protein is Large ribosomal subunit protein bL35 of Lachnoclostridium phytofermentans (strain ATCC 700394 / DSM 18823 / ISDg) (Clostridium phytofermentans).